The sequence spans 121 residues: MQNRIEITEANLRNDRLVLTSEINDGAERKPAGRMLTDSDHFAFVYILEQDESFEYVILNEGIWSDLKAALDAGLPVFLHIGNTELELNGFHDELGYLIENIKDNANYGEEMEERVKRIFL.

The protein belongs to the UPF0738 family.

The polypeptide is UPF0738 protein BLi01253/BL05110 (Bacillus licheniformis (strain ATCC 14580 / DSM 13 / JCM 2505 / CCUG 7422 / NBRC 12200 / NCIMB 9375 / NCTC 10341 / NRRL NRS-1264 / Gibson 46)).